Here is a 412-residue protein sequence, read N- to C-terminus: Gamma-glutamyl phosphate reductase (412 aa).

This sequence belongs to the gamma-glutamyl phosphate reductase family.

The protein localises to the cytoplasm. The catalysed reaction is L-glutamate 5-semialdehyde + phosphate + NADP(+) = L-glutamyl 5-phosphate + NADPH + H(+). The protein operates within amino-acid biosynthesis; L-proline biosynthesis; L-glutamate 5-semialdehyde from L-glutamate: step 2/2. Catalyzes the NADPH-dependent reduction of L-glutamate 5-phosphate into L-glutamate 5-semialdehyde and phosphate. The product spontaneously undergoes cyclization to form 1-pyrroline-5-carboxylate. In Streptococcus suis (strain 98HAH33), this protein is Gamma-glutamyl phosphate reductase.